Reading from the N-terminus, the 61-residue chain is [Thr6]-bradykinyl-Val,Asp (61 aa).

An N-terminal signal peptide occupies residues 1–22 (MSFLKKSLFLVLFLGFVSFSIC). A propeptide spanning residues 23–50 (EEEKREDEEEENEREENKESEEKRNQEE) is cleaved from the precursor. The tract at residues 24–61 (EEKREDEEEENEREENKESEEKRNQEERPPGFTPFRVD) is disordered. Over residues 26 to 36 (KREDEEEENER) the composition is skewed to acidic residues. Positions 37–52 (EENKESEEKRNQEERP) are enriched in basic and acidic residues. Proline 53 carries the 4-hydroxyproline; in form [Hyp3,Thr6]-bradykinyl-Val,Asp and [Hyp3,Thr6]-bradykinin modification.

Belongs to the frog skin active peptide (FSAP) family. Bradykinin-related peptide subfamily. As to expression, expressed by the skin glands.

The protein resides in the secreted. In terms of biological role, induces relaxation of rat smooth muscle from tail artery (EC(50)=16.8 nM) and contraction of that from ileum (EC(50)=205 nM), urinary bladder (EC(50)=895 nM) and uterus (EC(50)=60.3 nM). Binds to both bradykinin receptor B1 (BDKRB1) and B2 (BDKRB2). [Hyp3,Thr6]-bradykinin: Induces relaxation of rat smooth muscle from tail artery (EC(50)=56.7 nM) and contraction of that from ileum (EC(50)=588 nM), urinary bladder (EC(50)=4.6 uM) and uterus (EC(50)=3.9 nM). Binds to both bradykinin receptor B1 (BDKRB1) and B2 (BDKRB2). In arterial smooth muscle, the effect via BDKRB1 is stronger, in uterus, ileum and urinary bladder the effect via BDKRB2. Functionally, induces relaxation of rat smooth muscle from tail artery (EC(50)=10.8 nM) and contraction of that from ileum (EC(50)=645 nM), urinary bladder (EC(50)=1.1 uM) and uterus (EC(50)=1.2 uM). Binds to both bradykinin receptor B1 (BDKRB1) and B2 (BDKRB2). Apart from uterus smooth muscle, the effect via BDKRB2 is stronger. Its function is as follows. [Hyp3,Thr6]-bradykinyl-Val,Asp: Induces relaxation of rat smooth muscle from tail artery (EC(50)=3.5 nM) and contraction of that from ileum (EC(50)=223 nM), urinary bladder (EC(50)=1.5 uM) and uterus (EC(50)=356 nM). Binds to both bradykinin receptor B1 (BDKRB1) and B2 (BDKRB2); the effects via BDKRB2 are stronger. This chain is [Thr6]-bradykinyl-Val,Asp, found in Agalychnis dacnicolor (Giant Mexican leaf frog).